A 309-amino-acid polypeptide reads, in one-letter code: uncharacterized protein (309 aa).

Over residues 1 to 16 (MAGNSRRRGAVRKAGT) the composition is skewed to basic residues. Residues 1-70 (MAGNSRRRGA…AKRTEETETV (70 aa)) are disordered. S-adenosyl-L-methionine contacts are provided by glycine 261, isoleucine 281, and leucine 290.

This sequence belongs to the class IV-like SAM-binding methyltransferase superfamily. RNA methyltransferase TrmH family.

This is an uncharacterized protein from Mycobacterium avium (strain 104).